An 828-amino-acid chain; its full sequence is DNA gyrase subunit A (828 aa).

Positions 38–501 constitute a Topo IIA-type catalytic domain; it reads LPDARDGLKP…SYESIDTEDL (464 aa). Tyr-126 functions as the O-(5'-phospho-DNA)-tyrosine intermediate in the catalytic mechanism. Residues 528-534 carry the GyrA-box motif; sequence QNRGGKG.

Belongs to the type II topoisomerase GyrA/ParC subunit family. In terms of assembly, heterotetramer, composed of two GyrA and two GyrB chains. In the heterotetramer, GyrA contains the active site tyrosine that forms a transient covalent intermediate with DNA, while GyrB binds cofactors and catalyzes ATP hydrolysis.

It is found in the cytoplasm. It catalyses the reaction ATP-dependent breakage, passage and rejoining of double-stranded DNA.. Its function is as follows. A type II topoisomerase that negatively supercoils closed circular double-stranded (ds) DNA in an ATP-dependent manner to modulate DNA topology and maintain chromosomes in an underwound state. Negative supercoiling favors strand separation, and DNA replication, transcription, recombination and repair, all of which involve strand separation. Also able to catalyze the interconversion of other topological isomers of dsDNA rings, including catenanes and knotted rings. Type II topoisomerases break and join 2 DNA strands simultaneously in an ATP-dependent manner. This chain is DNA gyrase subunit A, found in Helicobacter pylori (strain J99 / ATCC 700824) (Campylobacter pylori J99).